A 150-amino-acid chain; its full sequence is MSLQFNTVALLLVVLILLGVLSNNSSVTISAAILLLMQQTFLAKYIPFMEKHGITLGIIILTIGVLSPIVSGKIQLPHLAVFLNWKMWLAVAVGLLVAWLGGRGVGLMGAQPVLLTGLLVGTILGVAFVGGIPVGPLIAAGILSLFLGKS.

4 helical membrane passes run 12–34 (LVVL…AAIL), 52–72 (HGIT…IVSG), 79–99 (LAVF…LVAW), and 123–143 (ILGV…AGIL).

This sequence belongs to the UPF0756 family.

The protein localises to the cell membrane. This is UPF0756 membrane protein PM0771 from Pasteurella multocida (strain Pm70).